The chain runs to 387 residues: Guanylate kinase 1 (387 aa).

In terms of domain architecture, Guanylate kinase-like spans 137-319 (EKPIVISGPS…CYKKLKNLLG (183 aa)). 144–151 (GPSGVGKG) serves as a coordination point for ATP. Residues Arg-177, Arg-270, and Arg-281 contribute to the active site. ATP contacts are provided by Asn-304 and Asp-305.

This sequence belongs to the guanylate kinase family. In terms of assembly, monomer.

The catalysed reaction is GMP + ATP = GDP + ADP. Functionally, essential for recycling GMP and indirectly, cGMP. Required for normal development of the gametophyte and embryo, in association with GK2. This is Guanylate kinase 1 (GK-1) from Arabidopsis thaliana (Mouse-ear cress).